A 122-amino-acid chain; its full sequence is Large ribosomal subunit protein uL14 (122 aa).

The protein belongs to the universal ribosomal protein uL14 family. In terms of assembly, part of the 50S ribosomal subunit. Forms a cluster with proteins L3 and L19. In the 70S ribosome, L14 and L19 interact and together make contacts with the 16S rRNA in bridges B5 and B8.

Binds to 23S rRNA. Forms part of two intersubunit bridges in the 70S ribosome. This is Large ribosomal subunit protein uL14 from Natranaerobius thermophilus (strain ATCC BAA-1301 / DSM 18059 / JW/NM-WN-LF).